The following is a 330-amino-acid chain: Aspartate--ammonia ligase (330 aa).

Belongs to the class-II aminoacyl-tRNA synthetase family. AsnA subfamily.

The protein resides in the cytoplasm. The catalysed reaction is L-aspartate + NH4(+) + ATP = L-asparagine + AMP + diphosphate + H(+). It participates in amino-acid biosynthesis; L-asparagine biosynthesis; L-asparagine from L-aspartate (ammonia route): step 1/1. The sequence is that of Aspartate--ammonia ligase from Photorhabdus laumondii subsp. laumondii (strain DSM 15139 / CIP 105565 / TT01) (Photorhabdus luminescens subsp. laumondii).